Consider the following 515-residue polypeptide: Glucose-6-phosphate 1-dehydrogenase X (515 aa).

A2 carries the N-acetylalanine modification. NADP(+)-binding positions include 38 to 45 (GASGDLAK), R72, Y147, and K171. D-glucose 6-phosphate is bound by residues K171, 201–205 (HYLGK), E239, and D258. H263 functions as the Proton acceptor in the catalytic mechanism. R357 provides a ligand contact to NADP(+). D-glucose 6-phosphate contacts are provided by K360 and R365. Positions 366, 370, and 393 each coordinate NADP(+). Q395 is a binding site for D-glucose 6-phosphate. Residues 401–403 (YTK), 421–423 (DLT), R487, and Y503 contribute to the NADP(+) site. Y507 is subject to Phosphotyrosine. W509 contributes to the NADP(+) binding site.

This sequence belongs to the glucose-6-phosphate dehydrogenase family. In terms of assembly, homotetramer; dimer of dimers. Interacts with SIRT2; the interaction is enhanced by H(2)O(2) treatment. Forms a ternary complex with ALDOB and TP53; this interaction is direct. ALDOB stabilizes the complex inhibiting G6PD activity and keeping oxidative pentose phosphate metabolism in check. In terms of processing, acetylated by ELP3 at Lys-403; acetylation inhibits its homodimerization and enzyme activity. Deacetylated by SIRT2 at Lys-403; deacetylation stimulates its enzyme activity.

It localises to the cytoplasm. The protein resides in the cytosol. Its subcellular location is the membrane. The enzyme catalyses D-glucose 6-phosphate + NADP(+) = 6-phospho-D-glucono-1,5-lactone + NADPH + H(+). It participates in carbohydrate degradation; pentose phosphate pathway; D-ribulose 5-phosphate from D-glucose 6-phosphate (oxidative stage): step 1/3. In terms of biological role, catalyzes the rate-limiting step of the oxidative pentose-phosphate pathway, which represents a route for the dissimilation of carbohydrates besides glycolysis. The main function of this enzyme is to provide reducing power (NADPH) and pentose phosphates for fatty acid and nucleic acid synthesis. In Mus musculus (Mouse), this protein is Glucose-6-phosphate 1-dehydrogenase X (G6pdx).